A 75-amino-acid polypeptide reads, in one-letter code: UPF0352 protein VSAL_I1058 (75 aa).

This sequence belongs to the UPF0352 family.

This is UPF0352 protein VSAL_I1058 from Aliivibrio salmonicida (strain LFI1238) (Vibrio salmonicida (strain LFI1238)).